The following is a 163-amino-acid chain: Glutathione peroxidase-like peroxiredoxin HYR1 (163 aa).

Residue Cys36 is the Cysteine sulfenic acid (-SOH) intermediate of the active site. Cys36 and Cys82 are joined by a disulfide.

It belongs to the glutathione peroxidase family. Interacts with YAP1 and probably YBP1.

The protein localises to the cytoplasm. Its subcellular location is the mitochondrion intermembrane space. The protein resides in the peroxisome matrix. It catalyses the reaction a hydroperoxide + [thioredoxin]-dithiol = an alcohol + [thioredoxin]-disulfide + H2O. In terms of biological role, involved in oxidative stress response and redox homeostasis. Functions as a sensor and transducer of hydroperoxide stress. In response to hydroperoxide stress it oxidizes (activates) the transcription activator YAP1, which is involved in transcription activation of genes of the oxidative stress response pathway. May also play a direct role in hydroperoxide scavenging, being the most active of three closely related S.cerevisiae peroxiredoxins (GPX1, GPX2, and HYR1/GPX3) with respect to peroxide and lipid hydroperoxide reduction. The three enzymes are not required for the glutaredoxin-mediated antioxidant function. In the presence of peroxides, HYR1/GPX3 is directly oxidized at Cys-36 to form a cysteine sulfenic acid (-SOH). Cys-36-SOH then forms either an intramolecular disulfide bond (Cys-36 with Cys-82) or a transient, intermolecular disulfide bond with 'Cys-598' of YAP1, which is further resolved into a YAP1 intramolecular disulfide bond ('Cys-303' with 'Cys-598'), which causes its nuclear accumulation and activation, and a reduced Cys-36 in HYR1/GPX3. This is Glutathione peroxidase-like peroxiredoxin HYR1 from Saccharomyces cerevisiae (strain ATCC 204508 / S288c) (Baker's yeast).